We begin with the raw amino-acid sequence, 268 residues long: Phosphatidylglycerol--prolipoprotein diacylglyceryl transferase (268 aa).

Transmembrane regions (helical) follow at residues Trp25–Phe45, Tyr57–Phe77, and Val93–Phe113. An a 1,2-diacyl-sn-glycero-3-phospho-(1'-sn-glycerol)-binding site is contributed by Arg142. The next 4 helical transmembrane spans lie at Ile151–Pro171, Val175–Trp195, Gly204–Phe224, and Pro236–Phe256.

It belongs to the Lgt family.

It localises to the cell inner membrane. The enzyme catalyses L-cysteinyl-[prolipoprotein] + a 1,2-diacyl-sn-glycero-3-phospho-(1'-sn-glycerol) = an S-1,2-diacyl-sn-glyceryl-L-cysteinyl-[prolipoprotein] + sn-glycerol 1-phosphate + H(+). It functions in the pathway protein modification; lipoprotein biosynthesis (diacylglyceryl transfer). Functionally, catalyzes the transfer of the diacylglyceryl group from phosphatidylglycerol to the sulfhydryl group of the N-terminal cysteine of a prolipoprotein, the first step in the formation of mature lipoproteins. The protein is Phosphatidylglycerol--prolipoprotein diacylglyceryl transferase of Chloroherpeton thalassium (strain ATCC 35110 / GB-78).